The following is a 558-amino-acid chain: Aurovertin biosynthesis cluster transcription factor aurF (558 aa).

The protein belongs to the POU transcription factor family. Class-3 subfamily.

Its subcellular location is the nucleus. Its function is as follows. Transcription factor that regulates the expression of the gene cluster that mediates the biosynthesis of aurovertins, fungal polyketides that exhibit potent inhibition of adenosine triphosphate synthase. The polypeptide is Aurovertin biosynthesis cluster transcription factor aurF (Calcarisporium arbuscula (Dendryphion arbuscula)).